Consider the following 391-residue polypeptide: Metal tolerance protein 7 (391 aa).

The interval 1–21 (MGSRGRRGGGERETETEEDET) is disordered. Residues 1–103 (MGSRGRRGGG…LRQMAKGERL (103 aa)) are Cytoplasmic-facing. Residues 104 to 124 (AINLSNIINLILFIGKVLASV) traverse the membrane as a helical segment. At 125–134 (ESLSMAVIAS) the chain is on the vacuolar side. A helical membrane pass occupies residues 135-155 (TLDSLLDLLSGFILWFTAHAM). Residues 156-171 (KKPNKYSYPIGKRRMQ) lie on the Cytoplasmic side of the membrane. A helical transmembrane segment spans residues 172–192 (PVGIIVFASVMGTLGFQVLIE). Over 193–210 (SGRQLITNEHQVFDHRKE) the chain is Vacuolar. A helical membrane pass occupies residues 211-231 (LWMIGSMSSVAVVKFFLMLYC). Residues 232 to 246 (RSFKNEIVRAYAQDH) lie on the Cytoplasmic side of the membrane. The chain crosses the membrane as a helical span at residues 247–264 (FFDVITNSVGLVSALLAV). Residues 265 to 266 (RY) lie on the Vacuolar side of the membrane. The helical transmembrane segment at 267–287 (KWWMDPVGAILIAVYTITTWA) threads the bilayer. At 288–391 (RTVVENVGTL…THRPEHKAEV (104 aa)) the chain is on the cytoplasmic side.

It belongs to the cation diffusion facilitator (CDF) transporter (TC 2.A.4) family. SLC30A subfamily.

The protein resides in the vacuole membrane. Involved in sequestration of excess metal in the cytoplasm into vacuoles to maintain metal homeostasis. The sequence is that of Metal tolerance protein 7 (MTP7) from Oryza sativa subsp. japonica (Rice).